The primary structure comprises 206 residues: uncharacterized protein (206 aa).

The protein resides in the plastid. The protein localises to the cyanelle. This is an uncharacterized protein from Cyanophora paradoxa.